A 180-amino-acid polypeptide reads, in one-letter code: Large ribosomal subunit protein uL6 (180 aa).

It belongs to the universal ribosomal protein uL6 family. As to quaternary structure, part of the 50S ribosomal subunit.

Its function is as follows. This protein binds to the 23S rRNA, and is important in its secondary structure. It is located near the subunit interface in the base of the L7/L12 stalk, and near the tRNA binding site of the peptidyltransferase center. This is Large ribosomal subunit protein uL6 from Borreliella burgdorferi (strain ATCC 35210 / DSM 4680 / CIP 102532 / B31) (Borrelia burgdorferi).